The sequence spans 95 residues: Heteroscorpine-1 (95 aa).

The N-terminal stretch at 1-19 (MNSKLTALIFLGLVAIASC) is a signal peptide. In terms of domain architecture, BetaSPN-type CS-alpha/beta spans 55-95 (EFQCVANIDTMGNCETHCQKTSGEKGFCHGTKCKCGKPLSY). 3 cysteine pairs are disulfide-bonded: C58–C82, C68–C87, and C72–C89.

It belongs to the long chain scorpion toxin family. Class 3 subfamily. In terms of processing, contains 3 disulfide bonds. Expressed by the venom gland.

The protein resides in the secreted. Functionally, has antibacterial activity against B.subtilis, K.pneumoniae and P.aeruginosa. This Heterometrus laoticus (Thai giant scorpion) protein is Heteroscorpine-1.